The primary structure comprises 208 residues: MARYTGPSCRLCRRENMELFLKGERCYTDKCAIKRRNYPPGQHGQGRPKVSNYGIQLREKQKVRRIYGVLEKQFRSYFEEADRMRGVTGENLLSLLERRLDNVVYRLGFASSRTEARILVRHNHFTLNGRKANIPSIQLKAGDVVVLKEKSRKIACINESLDAVVRRGTPQWLELDKEGYKGVVKLLPAREDIAMPIQEQLIVELYSK.

The S4 RNA-binding domain maps to 98–158 (RRLDNVVYRL…EKSRKIACIN (61 aa)).

The protein belongs to the universal ribosomal protein uS4 family. As to quaternary structure, part of the 30S ribosomal subunit. Contacts protein S5. The interaction surface between S4 and S5 is involved in control of translational fidelity.

Functionally, one of the primary rRNA binding proteins, it binds directly to 16S rRNA where it nucleates assembly of the body of the 30S subunit. In terms of biological role, with S5 and S12 plays an important role in translational accuracy. This is Small ribosomal subunit protein uS4 from Geobacter metallireducens (strain ATCC 53774 / DSM 7210 / GS-15).